The chain runs to 90 residues: Putative membrane protein insertion efficiency factor (90 aa).

This sequence belongs to the UPF0161 family.

The protein resides in the cell membrane. Could be involved in insertion of integral membrane proteins into the membrane. In Oceanobacillus iheyensis (strain DSM 14371 / CIP 107618 / JCM 11309 / KCTC 3954 / HTE831), this protein is Putative membrane protein insertion efficiency factor.